The chain runs to 144 residues: Crossover junction endodeoxyribonuclease Hjc (144 aa).

E12 is a binding site for Mg(2+). The active site involves S32. 2 residues coordinate Mg(2+): D42 and E55.

It belongs to the Holliday junction resolvase Hjc family. As to quaternary structure, homodimer; forms a 2:1 complex with Hel308 (Hjm). May form a complex with Holliday junction DNA, Hjc and Hjm. The cofactor is Mg(2+).

It catalyses the reaction Endonucleolytic cleavage at a junction such as a reciprocal single-stranded crossover between two homologous DNA duplexes (Holliday junction).. With respect to regulation, cleavage stimulated by PCNA123 and PCNA323 and by RadC2. A structure-specific endonuclease that resolves Holliday junction (HJ) intermediates during genetic recombination. Cleaves 4-way DNA junctions introducing paired nicks in opposing strands, leaving a 5'-terminal phosphate and a 3'-terminal hydroxyl group that are subsequently ligated to produce recombinant products. Inhibits the helicase activity of Hel308 (Hjm). This Sulfurisphaera tokodaii (strain DSM 16993 / JCM 10545 / NBRC 100140 / 7) (Sulfolobus tokodaii) protein is Crossover junction endodeoxyribonuclease Hjc.